The chain runs to 320 residues: Malate dehydrogenase (320 aa).

NAD(+) is bound by residues 10 to 15 and aspartate 34; that span reads GSGMIG. Residues arginine 83 and arginine 89 each contribute to the substrate site. NAD(+)-binding positions include asparagine 96 and 119 to 121; that span reads ITN. Asparagine 121 and arginine 152 together coordinate substrate. Residue histidine 176 is the Proton acceptor of the active site.

Belongs to the LDH/MDH superfamily. MDH type 3 family.

The enzyme catalyses (S)-malate + NAD(+) = oxaloacetate + NADH + H(+). Catalyzes the reversible oxidation of malate to oxaloacetate. In Bartonella quintana (strain Toulouse) (Rochalimaea quintana), this protein is Malate dehydrogenase.